A 320-amino-acid chain; its full sequence is Putative malonate transporter (320 aa).

8 helical membrane-spanning segments follow: residues 1 to 21 (MAEI…GYLT), 32 to 52 (MGWL…FKLV), 65 to 85 (FILT…AIGL), 113 to 133 (GLAL…IFCF), 167 to 187 (IAFH…FLSF), 196 to 216 (LIDY…GVTL), 256 to 276 (IWVQ…VFVI), and 289 to 309 (ATIL…LYLI).

It belongs to the auxin efflux carrier (TC 2.A.69) family.

It is found in the cell membrane. The chain is Putative malonate transporter (mdcF) from Rhizobium meliloti (strain 1021) (Ensifer meliloti).